The primary structure comprises 226 residues: Lysosomal-associated transmembrane protein 4B (226 aa).

A run of 4 helical transmembrane segments spans residues 26–46 (ILLGVWYLILNAVVLLILLSA), 72–92 (MCIAIAISVLMILICAMATYG), 100–120 (WIIPFFCYQIFDFALNTLVAV), and 153–173 (CLVLIILLFISIILAFKGYLI). The interval 205–221 (PPYDDATVNSATKEPPP) is required for NEDD4 interaction.

The protein belongs to the LAPTM4/LAPTM5 transporter family. Homooligomer; upon reaching the lysosomes. Interacts with MCOLN1. Interacts with NEDD4; may play a role in the lysosomal sorting of LAPTM4B; enhances HGS association with NEDD4; mediates inhibition of EGFR degradation. Interacts with PIP5K1C; promotes SNX5 association with LAPTM4B; kinase activity of PIP5K1C is required; interaction is regulated by phosphatidylinositol 4,5-bisphosphate generated by PIP5K1C. Interacts with HGS; promotes HGS ubiquitination. Interacts with SNX5. Interacts with SLC3A2 and SLC7A5; recruits SLC3A2 and SLC7A5 to lysosomes to promote leucine uptake into these organelles and is required for mTORC1 activation. Interacts with LRRC32; decreases TGFB1 production in regulatory T cells. Interacts with BECN1; competes with EGFR for LAPTM4B binding; regulates EGFR activity. Interacts with EGFR; positively correlates with EGFR activation. In terms of processing, undergoes proteolytic cleavage following delivery to the lysosomes. Ubiquitinated by NEDD4. Strongly expressed in fetal ovary, testis, adrenal gland, liver and uterus, and weakly expressed in the spleen.

The protein localises to the endomembrane system. It is found in the late endosome membrane. It localises to the cell membrane. Its subcellular location is the cell projection. The protein resides in the lysosome membrane. The protein localises to the endosome membrane. It is found in the endosome. It localises to the multivesicular body membrane. Its subcellular location is the multivesicular body lumen. Its function is as follows. Required for optimal lysosomal function. Blocks EGF-stimulated EGFR intraluminal sorting and degradation. Conversely by binding with the phosphatidylinositol 4,5-bisphosphate, regulates its PIP5K1C interaction, inhibits HGS ubiquitination and relieves LAPTM4B inhibition of EGFR degradation. Recruits SLC3A2 and SLC7A5 (the Leu transporter) to the lysosome, promoting entry of leucine and other essential amino acid (EAA) into the lysosome, stimulating activation of proton-transporting vacuolar (V)-ATPase protein pump (V-ATPase) and hence mTORC1 activation. Plays a role as negative regulator of TGFB1 production in regulatory T cells. Binds ceramide and facilitates its exit from late endosome in order to control cell death pathways. This chain is Lysosomal-associated transmembrane protein 4B, found in Bos taurus (Bovine).